Consider the following 284-residue polypeptide: Gap junction beta-1 protein (284 aa).

Over 1–22 (MNWTGLYTLLSGVNRHSTAIGR) the chain is Cytoplasmic. Residues 23 to 45 (VWLSVIFIFRIMVLVVAAESVWG) traverse the membrane as a helical segment. Residues 46 to 75 (DEKSSFICNTLQPGCNSVCYDHFFPISHVR) lie on the Extracellular side of the membrane. Residues 76 to 95 (LWSLQLILVSTPALLVAMHV) form a helical membrane-spanning segment. Topologically, residues 96-130 (AHQQHIEKKMLRLEGHGDPLHLEEVKRHKVHISGT) are cytoplasmic. The helical transmembrane segment at 131-153 (LWWTYVISVVFRLLFEAAFMYVF) threads the bilayer. At 154 to 191 (YLLYPGYAMVRLVKCDAYPCPNTVDCFVSRPTEKTIFT) the chain is on the extracellular side. A helical transmembrane segment spans residues 192–214 (VFMLAASGICIILNVAEVVYLIF). The Cytoplasmic portion of the chain corresponds to 215-284 (RACARRAQRR…AEKSDRCSAC (70 aa)). 4 positions are modified to phosphoserine: Ser-233, Ser-259, Ser-267, and Ser-278.

Belongs to the connexin family. Beta-type (group I) subfamily. A connexon is composed of a hexamer of connexins. Interacts with CNST.

Its subcellular location is the cell membrane. It is found in the cell junction. It localises to the gap junction. Functionally, one gap junction consists of a cluster of closely packed pairs of transmembrane channels, the connexons, through which materials of low MW diffuse from one cell to a neighboring cell. The chain is Gap junction beta-1 protein (GJB1) from Bos taurus (Bovine).